The sequence spans 438 residues: Metacaspase-1B (438 aa).

The interval 1 to 125 is disordered; it reads MYYHHSHQGW…SQHFGRGAPS (125 aa). Residues 29 to 38 are compositionally biased toward low complexity; it reads PYPYSSNAQY. Over residues 39–74 the composition is skewed to pro residues; it reads QPPPGPPPTSHYAPPPGPPPSHYYPPPGSYPSPAPS. Residues H222 and C278 contribute to the active site.

Belongs to the peptidase C14B family.

Involved in cell death (apoptosis). The sequence is that of Metacaspase-1B (casB) from Aspergillus niger (strain ATCC MYA-4892 / CBS 513.88 / FGSC A1513).